The sequence spans 634 residues: 1-deoxy-D-xylulose-5-phosphate synthase (634 aa).

Thiamine diphosphate contacts are provided by residues histidine 79 and 120–122 (GHA). A Mg(2+)-binding site is contributed by aspartate 151. Thiamine diphosphate is bound by residues 152 to 153 (GS), asparagine 180, tyrosine 292, and glutamate 376. Residue asparagine 180 coordinates Mg(2+).

This sequence belongs to the transketolase family. DXPS subfamily. Homodimer. Requires Mg(2+) as cofactor. Thiamine diphosphate serves as cofactor.

It carries out the reaction D-glyceraldehyde 3-phosphate + pyruvate + H(+) = 1-deoxy-D-xylulose 5-phosphate + CO2. Its pathway is metabolic intermediate biosynthesis; 1-deoxy-D-xylulose 5-phosphate biosynthesis; 1-deoxy-D-xylulose 5-phosphate from D-glyceraldehyde 3-phosphate and pyruvate: step 1/1. Its function is as follows. Catalyzes the acyloin condensation reaction between C atoms 2 and 3 of pyruvate and glyceraldehyde 3-phosphate to yield 1-deoxy-D-xylulose-5-phosphate (DXP). The polypeptide is 1-deoxy-D-xylulose-5-phosphate synthase (Porphyromonas gingivalis (strain ATCC BAA-308 / W83)).